The sequence spans 671 residues: Chitin biosynthesis protein CHS5 (671 aa).

The Fibronectin type-III domain maps to 78 to 168; it reads KPESPVLKIV…EKVILRTHKM (91 aa). One can recognise a BRCT domain in the interval 166-262; the sequence is HKMTDMSGIT…RIVGVRGFYL (97 aa). The interval 280–671 is disordered; it reads EELSYSKENE…KKNKKKGKKK (392 aa). At Thr-305 the chain carries Phosphothreonine. Polar residues predominate over residues 311 to 321; it reads ASPNDNESNPS. Basic and acidic residues predominate over residues 322 to 332; it reads EAKEQGEKSGH. Ser-338, Ser-362, Ser-365, Ser-383, and Ser-384 each carry phosphoserine. Over residues 349–365 the composition is skewed to polar residues; it reads ALENETTIETVNPSVRS. A compositionally biased stretch (basic and acidic residues) spans 409-419; sequence KSEDTDTHSNE. Polar residues predominate over residues 434 to 443; that stretch reads NNITTESAGE. Residues 461-486 are compositionally biased toward acidic residues; it reads EIETPEVNESIEDANEPAEDSNEPVE. A compositionally biased stretch (basic and acidic residues) spans 487-521; that stretch reads DSNKPVKDSNKPVEDSNKPVEDSNKPVEDSNKPVE. Over residues 522–538 the composition is skewed to acidic residues; that stretch reads DANEPVEDTSEPVEDAG. The span at 542–551 shows a compositional bias: polar residues; it reads QETNEFTTDI. Residues Ser-573 and Ser-579 each carry the phosphoserine modification. A compositionally biased stretch (basic and acidic residues) spans 581–591; it reads EDVKPEEKGSE. Lys-584 participates in a covalent cross-link: Glycyl lysine isopeptide (Lys-Gly) (interchain with G-Cter in ubiquitin). A Phosphoserine modification is found at Ser-590. Polar residues predominate over residues 606-620; it reads GESTTHQKTEASASL. Residues 627–638 show a composition bias toward acidic residues; the sequence is EEQETTEAEVNT. The segment covering 657–671 has biased composition (basic residues); sequence NKKKNKKNKKKGKKK.

Belongs to the CHS5 family. As to quaternary structure, component of the CHS5/6 complex composed of the 4 CHAPS proteins BCH1, BCH2, BUD7, and CHS6 as well as at least CHS5 and GTP-bound ARF1. The complex interacts with the cargo protein CHS3.

Its subcellular location is the golgi apparatus. It is found in the trans-Golgi network membrane. Functionally, component of the CHS5/6 complex which mediates export of specific cargo proteins, including chitin synthase CHS3. Also involved in targeting FUS1 to sites of polarized growth. This is Chitin biosynthesis protein CHS5 (CHS5) from Saccharomyces cerevisiae (strain ATCC 204508 / S288c) (Baker's yeast).